The sequence spans 107 residues: Phosphoribosyl-ATP pyrophosphatase 1 (107 aa).

Belongs to the PRA-PH family.

The protein localises to the cytoplasm. The catalysed reaction is 1-(5-phospho-beta-D-ribosyl)-ATP + H2O = 1-(5-phospho-beta-D-ribosyl)-5'-AMP + diphosphate + H(+). It functions in the pathway amino-acid biosynthesis; L-histidine biosynthesis; L-histidine from 5-phospho-alpha-D-ribose 1-diphosphate: step 2/9. The sequence is that of Phosphoribosyl-ATP pyrophosphatase 1 (hisE1) from Rhodopseudomonas palustris (strain ATCC BAA-98 / CGA009).